Here is a 445-residue protein sequence, read N- to C-terminus: Protein kinase C and casein kinase substrate in neurons protein 1 (445 aa).

An F-BAR domain is found at 12–282 (DETTDSFWEV…TIVSASAQED (271 aa)). Coiled-coil stretches lie at residues 146-167 (AKKL…KEEK) and 183-219 (TTDQ…NKCT). A disordered region spans residues 327–390 (LTQVTHGAEH…PFEEDSKGVR (64 aa)). Composition is skewed to polar residues over residues 338 to 358 (TPQT…QYSA) and 368 to 379 (TAAQSASETNGG). Residues 386–445 (SKGVRVRALYDYEGQEQDELTFKAGDELTKLEDEDEQGWCKGRLDSGQLGLYPANYVEPV) form the SH3 domain.

In terms of assembly, interacts with cobl.

It localises to the cytoplasm. It is found in the cytosol. The protein resides in the cell membrane. The protein localises to the cell projection. Its subcellular location is the synapse. It localises to the synaptosome. It is found in the cytoplasmic vesicle membrane. The protein resides in the ruffle membrane. The protein localises to the membrane. Functionally, binds to membranes via its F-BAR domain and mediates membrane tubulation. Plays a role in cellular transport processes by recruiting dynamins to membranes. Plays a role in the reorganization of the actin cytoskeleton and in neuron morphogenesis via its interaction with cobl, and by recruiting cobl to the cell cortex. Plays a role in the regulation of neurite formation, neurite branching and the regulation of neurite length. Required for normal synaptic vesicle endocytosis; this process retrieves previously released neurotransmitters to accommodate multiple cycles of neurotransmission. Required for normal excitatory and inhibitory synaptic transmission. Required for normal embryonic development, including normal development of laterality, normal body size and shape, as well as normal brain and heart development. Required for normal development of stereocilia and kinocilia in sensory hair cells of neuromasts in the posterior lateral line organ, and thus also for balance keeping and normal swimming behavior. The chain is Protein kinase C and casein kinase substrate in neurons protein 1 (pacsin1b) from Danio rerio (Zebrafish).